Here is a 476-residue protein sequence, read N- to C-terminus: H2.0-like homeobox protein (476 aa).

Disordered stretches follow at residues 120 to 169, 328 to 401, and 413 to 476; these read QHLP…PSSK, WRHS…HQTT, and TASS…LAGL. 2 stretches are compositionally biased toward low complexity: residues 123–134 and 158–168; these read PQQSPTQQQQPQ and HHSGSAPAPSS. The homeobox DNA-binding region spans 273-332; sequence RSWSRAVFSNLQRKGLEKRFEIQKYVTKPDRKQLAAMLGLTDAQVKVWFQNRRMKWRHSK. 2 stretches are compositionally biased toward basic and acidic residues: residues 331–346 and 355–368; these read SKEAQAQKDKDKEAGE and EGEREERSPSRSEG. The span at 369 to 379 shows a compositional bias: acidic residues; the sequence is EAESESSDSES. Basic and acidic residues predominate over residues 386–397; the sequence is DTERTEGTERSL. Positions 413–434 are enriched in low complexity; it reads TASSSTSGSSFSFSSTSSLGSG. Polar residues-rich tracts occupy residues 435–446 and 455–467; these read NTHVGSASSLGG and HQPSVTSSPQSPE.

It belongs to the H2.0 homeobox family. As to expression, expressed in Th1 cells, CD8-positive T-cells, B-cells and NK cells.

The protein resides in the nucleus. Its function is as follows. Transcription factor required for TBX21/T-bet-dependent maturation of Th1 cells as well as maintenance of Th1-specific gene expression. Involved in embryogenesis and hematopoiesis. In Mus musculus (Mouse), this protein is H2.0-like homeobox protein (Hlx).